Consider the following 206-residue polypeptide: Guanylate kinase (206 aa).

The Guanylate kinase-like domain maps to 6 to 185; it reads GAILVLSGPS…AAKTLRIIAD (180 aa). 13-20 is an ATP binding site; the sequence is GPSGAGKS.

It belongs to the guanylate kinase family.

The protein resides in the cytoplasm. The enzyme catalyses GMP + ATP = GDP + ADP. Functionally, essential for recycling GMP and indirectly, cGMP. In Sulfurimonas denitrificans (strain ATCC 33889 / DSM 1251) (Thiomicrospira denitrificans (strain ATCC 33889 / DSM 1251)), this protein is Guanylate kinase.